Consider the following 265-residue polypeptide: Indole-3-glycerol phosphate synthase (265 aa).

The protein belongs to the TrpC family.

It carries out the reaction 1-(2-carboxyphenylamino)-1-deoxy-D-ribulose 5-phosphate + H(+) = (1S,2R)-1-C-(indol-3-yl)glycerol 3-phosphate + CO2 + H2O. Its pathway is amino-acid biosynthesis; L-tryptophan biosynthesis; L-tryptophan from chorismate: step 4/5. This Hyphomonas neptunium (strain ATCC 15444) protein is Indole-3-glycerol phosphate synthase.